Reading from the N-terminus, the 329-residue chain is Mas-related G-protein coupled receptor member X2 (329 aa).

Topologically, residues 1–33 (MDPTTPAWGTESTTMNGNDQALPLLCGKETMIS) are extracellular. Residues 34 to 54 (VFLILFIALVGLVGNAFVLWL) form a helical membrane-spanning segment. At 55–63 (LGFRMRRNA) the chain is on the cytoplasmic side. The helical transmembrane segment at 64 to 84 (FSVYVLSLAGADFLFLCFQMT) threads the bilayer. Over 85-96 (SCLAYLINFFGS) the chain is Extracellular. The helical transmembrane segment at 97–116 (ISINIPSFFTVMTCAYLAGL) threads the bilayer. Over 117 to 143 (SMLSAISTERCLSVLWPIWYRCRRPRH) the chain is Cytoplasmic. Residues 144 to 164 (LSAVMCVLLWALSLLLSILEG) form a helical membrane-spanning segment. Topologically, residues 165–183 (KFCGFLFSDDDPGWCQTFD) are extracellular. A helical transmembrane segment spans residues 184 to 204 (FITAAWLMFLFVVLCGSSLAL). Over 205 to 227 (LVRILCGSRSLPLTRLYLTILLT) the chain is Cytoplasmic. A helical transmembrane segment spans residues 228 to 248 (VLIFLLCGLPFGIQWFLILWI). Residues 249 to 263 (WKNSVVLFCHIHPIS) lie on the Extracellular side of the membrane. A helical transmembrane segment spans residues 264-284 (VVLSSFNSSANPIIYFFVGSF). Residues 285-329 (RKQWRLRQPILKLALQRALQDTAEVDHSEGCFSQGTLEMSRSSLV) are Cytoplasmic-facing.

This sequence belongs to the G-protein coupled receptor 1 family. Mas subfamily.

It is found in the cell membrane. Functionally, mast cell-specific receptor for basic secretagogues, i.e. cationic amphiphilic drugs, as well as endo- or exogenous peptides, consisting of a basic head group and a hydrophobic core. Recognizes and binds small molecules containing a cyclized tetrahydroisoquinoline (THIQ), such as non-steroidal neuromuscular blocking drugs (NMBDs), including tubocurarine and atracurium. In response to these compounds, mediates pseudo-allergic reactions characterized by histamine release, inflammation and airway contraction. The protein is Mas-related G-protein coupled receptor member X2 (MRGPRX2) of Macaca mulatta (Rhesus macaque).